A 197-amino-acid polypeptide reads, in one-letter code: Phosphoheptose isomerase (197 aa).

Residues 36 to 197 form the SIS domain; sequence LFAALANNGR…IDALLLGDTE (162 aa). 51–53 contributes to the substrate binding site; that stretch reads NGG. Zn(2+)-binding residues include histidine 60 and glutamate 64. Substrate is bound by residues glutamate 64, 93 to 94, 119 to 121, serine 124, and glutamine 174; these read ND and STS. The Zn(2+) site is built by glutamine 174 and histidine 182.

Belongs to the SIS family. GmhA subfamily. In terms of assembly, homotetramer. It depends on Zn(2+) as a cofactor.

The protein resides in the cytoplasm. The enzyme catalyses 2 D-sedoheptulose 7-phosphate = D-glycero-alpha-D-manno-heptose 7-phosphate + D-glycero-beta-D-manno-heptose 7-phosphate. It functions in the pathway carbohydrate biosynthesis; D-glycero-D-manno-heptose 7-phosphate biosynthesis; D-glycero-alpha-D-manno-heptose 7-phosphate and D-glycero-beta-D-manno-heptose 7-phosphate from sedoheptulose 7-phosphate: step 1/1. In terms of biological role, catalyzes the isomerization of sedoheptulose 7-phosphate in D-glycero-D-manno-heptose 7-phosphate. The protein is Phosphoheptose isomerase of Bordetella avium (strain 197N).